Here is a 316-residue protein sequence, read N- to C-terminus: HPr kinase/phosphorylase (316 aa).

Catalysis depends on residues H143 and K164. 158 to 165 (GEAGSGKS) serves as a coordination point for ATP. S165 contributes to the Mg(2+) binding site. The active-site Proton acceptor; for phosphorylation activity. Proton donor; for dephosphorylation activity is the D182. The important for the catalytic mechanism of both phosphorylation and dephosphorylation stretch occupies residues 206-215 (LEVRGLGVLN). Mg(2+) is bound at residue E207. R251 is a catalytic residue. The important for the catalytic mechanism of dephosphorylation stretch occupies residues 272 to 277 (PVMPGR).

The protein belongs to the HPrK/P family. As to quaternary structure, homohexamer. The cofactor is Mg(2+).

The enzyme catalyses [HPr protein]-L-serine + ATP = [HPr protein]-O-phospho-L-serine + ADP + H(+). The catalysed reaction is [HPr protein]-O-phospho-L-serine + phosphate + H(+) = [HPr protein]-L-serine + diphosphate. In terms of biological role, catalyzes the ATP- as well as the pyrophosphate-dependent phosphorylation of a specific serine residue in HPr, a phosphocarrier protein of the phosphoenolpyruvate-dependent sugar phosphotransferase system (PTS). HprK/P also catalyzes the pyrophosphate-producing, inorganic phosphate-dependent dephosphorylation (phosphorolysis) of seryl-phosphorylated HPr (P-Ser-HPr). In Xanthomonas campestris pv. campestris (strain 8004), this protein is HPr kinase/phosphorylase.